Reading from the N-terminus, the 420-residue chain is L-rhamnose isomerase (420 aa).

Mn(2+)-binding residues include His-262, Asp-294, and Asp-296.

Belongs to the rhamnose isomerase family. Homotetramer. Requires Mn(2+) as cofactor.

The protein resides in the cytoplasm. The catalysed reaction is L-rhamnopyranose = L-rhamnulose. It participates in carbohydrate degradation; L-rhamnose degradation; glycerone phosphate from L-rhamnose: step 1/3. Functionally, catalyzes the interconversion of L-rhamnose and L-rhamnulose. This chain is L-rhamnose isomerase, found in Pectobacterium atrosepticum (strain SCRI 1043 / ATCC BAA-672) (Erwinia carotovora subsp. atroseptica).